A 195-amino-acid chain; its full sequence is Glycerol-3-phosphate acyltransferase (195 aa).

5 consecutive transmembrane segments (helical) span residues isoleucine 7–isoleucine 27, leucine 52–glutamine 72, isoleucine 80–phenylalanine 100, leucine 113–leucine 133, and leucine 147–isoleucine 167.

Belongs to the PlsY family. As to quaternary structure, probably interacts with PlsX.

It is found in the cell inner membrane. It catalyses the reaction an acyl phosphate + sn-glycerol 3-phosphate = a 1-acyl-sn-glycero-3-phosphate + phosphate. The protein operates within lipid metabolism; phospholipid metabolism. Catalyzes the transfer of an acyl group from acyl-phosphate (acyl-PO(4)) to glycerol-3-phosphate (G3P) to form lysophosphatidic acid (LPA). This enzyme utilizes acyl-phosphate as fatty acyl donor, but not acyl-CoA or acyl-ACP. The protein is Glycerol-3-phosphate acyltransferase of Ehrlichia ruminantium (strain Welgevonden).